We begin with the raw amino-acid sequence, 89 residues long: MALAIEAKRQILTGNQRHKTDTGSPEVQIALLSTRITMLTEHFKTHKKDHGSRKGLLTLVAKRRRLLTYLRDTDPERYKAVLLKLGIRR.

It belongs to the universal ribosomal protein uS15 family. In terms of assembly, part of the 30S ribosomal subunit. Forms a bridge to the 50S subunit in the 70S ribosome, contacting the 23S rRNA.

Functionally, one of the primary rRNA binding proteins, it binds directly to 16S rRNA where it helps nucleate assembly of the platform of the 30S subunit by binding and bridging several RNA helices of the 16S rRNA. Forms an intersubunit bridge (bridge B4) with the 23S rRNA of the 50S subunit in the ribosome. This is Small ribosomal subunit protein uS15 from Solibacter usitatus (strain Ellin6076).